The sequence spans 175 residues: MKVEGGESMHESEEGRDVPNGITKHKHHIPFQCIVSLPSGFQIEKPNDLKLVYDVSHLSMTKDTCKKRIEIDECGQVEIDLQVLKIKGVLSFIGNFSIEPIVCENMYTTVDRNPSISLSFQDTVYVDHILKYSVQQLPHYVIDGDHIQVRELQIKLMKENPQSAQISGLFCFVYE.

Residues 1–17 (MKVEGGESMHESEEGRD) show a composition bias toward basic and acidic residues. Positions 1–21 (MKVEGGESMHESEEGRDVPNG) are disordered.

This is an uncharacterized protein from Bacillus thuringiensis subsp. kurstaki.